The following is a 267-amino-acid chain: Non-homologous end joining protein Ku (267 aa).

Positions 11–195 (AVGQVSCAVA…KVKGEMLELA (185 aa)) constitute a Ku domain. Residues 229–267 (GRKPKRKAAPKKAREPSDLMAALRESVAATERPRRRKAG) are disordered.

Belongs to the prokaryotic Ku family. In terms of assembly, homodimer. Interacts with LigD.

Its function is as follows. With LigD forms a non-homologous end joining (NHEJ) DNA repair enzyme, which repairs dsDNA breaks with reduced fidelity. Binds linear dsDNA with 5'- and 3'- overhangs but not closed circular dsDNA nor ssDNA. Recruits and stimulates the ligase activity of LigD. This Cereibacter sphaeroides (strain KD131 / KCTC 12085) (Rhodobacter sphaeroides) protein is Non-homologous end joining protein Ku.